We begin with the raw amino-acid sequence, 607 residues long: Branchpoint-bridging protein (607 aa).

Composition is skewed to polar residues over residues 1–15 (MSWR…NNIP) and 35–45 (VTPSAPSSVTN). 2 disordered regions span residues 1-92 (MSWR…TENK) and 134-155 (VPAD…GRRV). Positions 46-76 (GDRDRDRDGPVYSNDRDVKRGRSPERSEDGP) are enriched in basic and acidic residues. The region spanning 201–281 (YVPVNDYPEI…EKVNKAKKLI (81 aa)) is the KH domain. 2 CCHC-type zinc fingers span residues 319 to 336 (QACQ…DCPE) and 344 to 361 (IICR…DCPD). Disordered stretches follow at residues 363–390 (QRGA…GGDA) and 407–607 (AAPA…PPGA). Over residues 373–389 (PGAGRTAGRIGSSGGGD) the composition is skewed to gly residues. Residues 472–500 (ARDRNERRHDDRDRGDSYYGGDRRHDDYG) show a composition bias toward basic and acidic residues. The segment covering 521-533 (SAPAIPTAPAYPG) has biased composition (low complexity). The segment covering 534–545 (AYGGYPGYGAPP) has biased composition (gly residues). 2 stretches are compositionally biased toward pro residues: residues 550–563 (APPP…PGAP) and 581–607 (APPP…PPGA).

The protein belongs to the BBP/SF1 family.

Its subcellular location is the nucleus. Functionally, necessary for the splicing of pre-mRNA. Has a role in the recognition of the branch site (5'-UACUAAC-3'), the pyrimidine tract and the 3'-splice site at the 3'-end of introns. This chain is Branchpoint-bridging protein (bbp-1), found in Neurospora crassa (strain ATCC 24698 / 74-OR23-1A / CBS 708.71 / DSM 1257 / FGSC 987).